A 163-amino-acid polypeptide reads, in one-letter code: Acetolactate synthase isozyme 3 small subunit (163 aa).

Residues 4 to 78 form the ACT domain; sequence ILSVLLENES…DVLRVSELGQ (75 aa).

It belongs to the acetolactate synthase small subunit family. As to quaternary structure, dimer of large and small chains.

It carries out the reaction 2 pyruvate + H(+) = (2S)-2-acetolactate + CO2. It functions in the pathway amino-acid biosynthesis; L-isoleucine biosynthesis; L-isoleucine from 2-oxobutanoate: step 1/4. It participates in amino-acid biosynthesis; L-valine biosynthesis; L-valine from pyruvate: step 1/4. With respect to regulation, sensitive to valine inhibition. This is Acetolactate synthase isozyme 3 small subunit (ilvH) from Salmonella typhimurium (strain LT2 / SGSC1412 / ATCC 700720).